The chain runs to 1139 residues: GRIP and coiled-coil domain-containing protein (1139 aa).

Positions 366–388 (NDDSQINNNVSNKVNSPDDDPNT) are disordered. A compositionally biased stretch (polar residues) spans 369 to 380 (SQINNNVSNKVN). Coiled coils occupy residues 472–648 (VTKL…INNE) and 758–877 (LYIL…ETQQ). A disordered region spans residues 1004-1024 (NEQENDNNNNNNNNNNNNNVE). Residues 1009 to 1022 (DNNNNNNNNNNNNN) are compositionally biased toward low complexity. Residues 1043 to 1084 (YKKIRKKLETYEILLNEQQEGKKKMTEEINSLKNQVKNYESI) are a coiled coil. The region spanning 1084 to 1135 (INGNYQHIIYQKNILSNFIAQIPSRIQVDDYVSVIFNSFNFSNQEIEAINIK) is the GRIP domain.

The chain is GRIP and coiled-coil domain-containing protein from Plasmodium falciparum (isolate 3D7).